Consider the following 450-residue polypeptide: Salicylate synthase (450 aa).

Glutamate 252 serves as the catalytic Proton donor. 270 to 271 (GT) is a substrate binding site. Position 297 (glutamate 297) interacts with Mg(2+). Residues tyrosine 385, arginine 405, and 419–421 (GAG) each bind substrate. Mg(2+) is bound by residues glutamate 431 and glutamate 434. Position 438 (lysine 438) interacts with substrate.

This sequence belongs to the anthranilate synthase component I family. Salicylate synthase subfamily. As to quaternary structure, monomer. Requires Mg(2+) as cofactor.

The enzyme catalyses chorismate = isochorismate. The catalysed reaction is isochorismate = salicylate + pyruvate. It catalyses the reaction chorismate = prephenate. It functions in the pathway siderophore biosynthesis; mycobactin biosynthesis. Involved in the incorporation of salicylate into the virulence-conferring salicylate-based siderophore mycobactin. Catalyzes the initial conversion of chorismate to yield the intermediate isochorismate (isochorismate synthase activity), and the subsequent elimination of the enolpyruvyl side chain in a lyase reaction to give salicylate (isochorismate pyruvate-lyase activity). In the absence of magnesium, MbtI displays a chorismate mutase activity and converts chorismate to prephenate. In Mycolicibacterium paratuberculosis (strain ATCC BAA-968 / K-10) (Mycobacterium paratuberculosis), this protein is Salicylate synthase (mbtI).